Here is a 164-residue protein sequence, read N- to C-terminus: 3-isopropylmalate dehydratase small subunit 1 (164 aa).

This sequence belongs to the LeuD family. LeuD type 2 subfamily. Heterodimer of LeuC and LeuD.

The enzyme catalyses (2R,3S)-3-isopropylmalate = (2S)-2-isopropylmalate. It functions in the pathway amino-acid biosynthesis; L-leucine biosynthesis; L-leucine from 3-methyl-2-oxobutanoate: step 2/4. Functionally, catalyzes the isomerization between 2-isopropylmalate and 3-isopropylmalate, via the formation of 2-isopropylmaleate. The chain is 3-isopropylmalate dehydratase small subunit 1 (leuD1) from Pyrococcus furiosus (strain ATCC 43587 / DSM 3638 / JCM 8422 / Vc1).